Consider the following 166-residue polypeptide: Small ribosomal subunit protein uS5 (166 aa).

An S5 DRBM domain is found at 11-74; the sequence is FLEKLIAVNR…EKARRNMVDV (64 aa).

It belongs to the universal ribosomal protein uS5 family. In terms of assembly, part of the 30S ribosomal subunit. Contacts proteins S4 and S8.

In terms of biological role, with S4 and S12 plays an important role in translational accuracy. Located at the back of the 30S subunit body where it stabilizes the conformation of the head with respect to the body. The sequence is that of Small ribosomal subunit protein uS5 from Alteromonas mediterranea (strain DSM 17117 / CIP 110805 / LMG 28347 / Deep ecotype).